The sequence spans 86 residues: Large ribosomal subunit protein bL31m (86 aa).

The N-terminal 18 residues, 1 to 18, are a transit peptide targeting the mitochondrion; it reads MKCSLRLFEKAGRLSVRS.

It belongs to the bacterial ribosomal protein bL31 family. Highly divergent. As to quaternary structure, component of the mitochondrial large ribosomal subunit (mt-LSU). Mature yeast 74S mitochondrial ribosomes consist of a small (37S) and a large (54S) subunit. The 37S small subunit contains a 15S ribosomal RNA (15S mt-rRNA) and at least 32 different proteins. The 54S large subunit contains a 21S rRNA (21S mt-rRNA) and at least 45 different proteins.

The protein localises to the mitochondrion. In terms of biological role, component of the mitochondrial ribosome (mitoribosome), a dedicated translation machinery responsible for the synthesis of mitochondrial genome-encoded proteins, including at least some of the essential transmembrane subunits of the mitochondrial respiratory chain. The mitoribosomes are attached to the mitochondrial inner membrane and translation products are cotranslationally integrated into the membrane. In Schizosaccharomyces pombe (strain 972 / ATCC 24843) (Fission yeast), this protein is Large ribosomal subunit protein bL31m (tam9).